Reading from the N-terminus, the 406-residue chain is Argininosuccinate synthase (406 aa).

ATP is bound by residues 10 to 18 and alanine 37; that span reads AYSGGLDTS. L-citrulline-binding residues include tyrosine 88 and serine 93. ATP is bound at residue glycine 118. Residues threonine 120, asparagine 124, and aspartate 125 each coordinate L-aspartate. Residue asparagine 124 participates in L-citrulline binding. L-citrulline contacts are provided by arginine 128, serine 179, serine 188, glutamate 264, and tyrosine 276.

This sequence belongs to the argininosuccinate synthase family. Type 1 subfamily. Homotetramer.

The protein resides in the cytoplasm. It carries out the reaction L-citrulline + L-aspartate + ATP = 2-(N(omega)-L-arginino)succinate + AMP + diphosphate + H(+). The protein operates within amino-acid biosynthesis; L-arginine biosynthesis; L-arginine from L-ornithine and carbamoyl phosphate: step 2/3. This Roseobacter denitrificans (strain ATCC 33942 / OCh 114) (Erythrobacter sp. (strain OCh 114)) protein is Argininosuccinate synthase.